A 202-amino-acid polypeptide reads, in one-letter code: 3-isopropylmalate dehydratase small subunit (202 aa).

It belongs to the LeuD family. LeuD type 1 subfamily. Heterodimer of LeuC and LeuD.

It catalyses the reaction (2R,3S)-3-isopropylmalate = (2S)-2-isopropylmalate. It participates in amino-acid biosynthesis; L-leucine biosynthesis; L-leucine from 3-methyl-2-oxobutanoate: step 2/4. Catalyzes the isomerization between 2-isopropylmalate and 3-isopropylmalate, via the formation of 2-isopropylmaleate. The chain is 3-isopropylmalate dehydratase small subunit from Buchnera aphidicola subsp. Pemphigus spyrothecae.